The sequence spans 352 residues: Photosystem II protein D1 (352 aa).

Residue Thr2 is modified to N-acetylthreonine. At Thr2 the chain carries Phosphothreonine. The next 3 helical transmembrane spans lie at 29–46, 118–133, and 142–156; these read YIGW…TATS, HFLL…EWEL, and WIAV…AATA. Residue His118 participates in chlorophyll a binding. Tyr126 provides a ligand contact to pheophytin a. [CaMn4O5] cluster contacts are provided by Asp170 and Glu189. A helical transmembrane segment spans residues 197-218; the sequence is FHMLGVAGVFGGSLFSAMHGSL. Chlorophyll a is bound at residue His198. A quinone is bound by residues His215 and 264–265; that span reads SF. His215 is a binding site for Fe cation. Fe cation is bound at residue His272. Residues 274–288 traverse the membrane as a helical segment; sequence FLAAWPVVGIWFTAL. His332, Glu333, Asp342, and Ala344 together coordinate [CaMn4O5] cluster. Residues 345-352 constitute a propeptide that is removed on maturation; that stretch reads SVEAPVVG.

Belongs to the reaction center PufL/M/PsbA/D family. As to quaternary structure, PSII is composed of 1 copy each of membrane proteins PsbA, PsbB, PsbC, PsbD, PsbE, PsbF, PsbH, PsbI, PsbJ, PsbK, PsbL, PsbM, PsbT, PsbX, PsbY, PsbZ, Psb30/Ycf12, at least 3 peripheral proteins of the oxygen-evolving complex and a large number of cofactors. It forms dimeric complexes. The D1/D2 heterodimer binds P680, chlorophylls that are the primary electron donor of PSII, and subsequent electron acceptors. It shares a non-heme iron and each subunit binds pheophytin, quinone, additional chlorophylls, carotenoids and lipids. D1 provides most of the ligands for the Mn4-Ca-O5 cluster of the oxygen-evolving complex (OEC). There is also a Cl(-1) ion associated with D1 and D2, which is required for oxygen evolution. The PSII complex binds additional chlorophylls, carotenoids and specific lipids. serves as cofactor. Post-translationally, tyr-161 forms a radical intermediate that is referred to as redox-active TyrZ, YZ or Y-Z. In terms of processing, C-terminally processed by CTPA; processing is essential to allow assembly of the oxygen-evolving complex and thus photosynthetic growth.

The protein localises to the plastid. The protein resides in the chloroplast thylakoid membrane. It carries out the reaction 2 a plastoquinone + 4 hnu + 2 H2O = 2 a plastoquinol + O2. Functionally, photosystem II (PSII) is a light-driven water:plastoquinone oxidoreductase that uses light energy to abstract electrons from H(2)O, generating O(2) and a proton gradient subsequently used for ATP formation. It consists of a core antenna complex that captures photons, and an electron transfer chain that converts photonic excitation into a charge separation. The D1/D2 (PsbA/PsbD) reaction center heterodimer binds P680, the primary electron donor of PSII as well as several subsequent electron acceptors. In Zygnema circumcarinatum (Green alga), this protein is Photosystem II protein D1.